The chain runs to 423 residues: Mannose-6-phosphate isomerase (423 aa).

Ala2 carries the N-acetylalanine modification. A phosphoserine mark is found at Ser102 and Ser108. The Zn(2+) site is built by Gln110, His112, Glu137, and His276. Residue Arg295 is part of the active site.

Belongs to the mannose-6-phosphate isomerase type 1 family. Zn(2+) is required as a cofactor. In terms of tissue distribution, expressed in all tissues, but more abundant in testis.

Its subcellular location is the cytoplasm. The catalysed reaction is D-mannose 6-phosphate = D-fructose 6-phosphate. Its pathway is nucleotide-sugar biosynthesis; GDP-alpha-D-mannose biosynthesis; alpha-D-mannose 1-phosphate from D-fructose 6-phosphate: step 1/2. Isomerase that catalyzes the interconversion of fructose-6-P and mannose-6-P and has a critical role in the supply of D-mannose derivatives required for many eukaryotic glycosylation reactions. This chain is Mannose-6-phosphate isomerase, found in Mus musculus (Mouse).